Here is a 172-residue protein sequence, read N- to C-terminus: L-methionine sulfoximine/L-methionine sulfone acetyltransferase (172 aa).

The region spanning 3–166 (ASIRDAGVAD…DLTFMQLNLD (164 aa)) is the N-acetyltransferase domain. Substrate contacts are provided by residues 75–77 (RPF) and 85–87 (EHS). Acetyl-CoA contacts are provided by residues 88–90 (VYV), 96–101 (GKGLGV), and asparagine 127.

As to quaternary structure, homodimer.

It carries out the reaction L-methionine sulfoximine + acetyl-CoA = N-acetyl-L-methionine sulfoximine + CoA + H(+). The enzyme catalyses L-methionine sulfone + acetyl-CoA = N-acetyl-L-methionine sulfone + CoA + H(+). Functionally, plays a role in the resistance against the toxic effects of L-methionine sulfoximine (MSX), a rare amino acid, which inhibits glutamine synthetase (GlnA). Catalyzes the acetylation of L-methionine sulfoximine (MSX). It can also use L-methionine sulfone (MSO). In Pseudomonas paraeruginosa (strain DSM 24068 / PA7) (Pseudomonas aeruginosa (strain PA7)), this protein is L-methionine sulfoximine/L-methionine sulfone acetyltransferase.